A 299-amino-acid polypeptide reads, in one-letter code: Ribonuclease Z (299 aa).

Positions 60, 62, 64, 65, 137, 207, and 265 each coordinate Zn(2+). The active-site Proton acceptor is the Asp64.

It belongs to the RNase Z family. In terms of assembly, homodimer. The cofactor is Zn(2+).

The enzyme catalyses Endonucleolytic cleavage of RNA, removing extra 3' nucleotides from tRNA precursor, generating 3' termini of tRNAs. A 3'-hydroxy group is left at the tRNA terminus and a 5'-phosphoryl group is left at the trailer molecule.. Functionally, zinc phosphodiesterase, which displays some tRNA 3'-processing endonuclease activity. Probably involved in tRNA maturation, by removing a 3'-trailer from precursor tRNA. This Nitrosopumilus maritimus (strain SCM1) protein is Ribonuclease Z.